The sequence spans 338 residues: Protein RecA (338 aa).

66–73 lines the ATP pocket; that stretch reads GPESSGKT.

The protein belongs to the RecA family.

The protein localises to the cytoplasm. Its function is as follows. Can catalyze the hydrolysis of ATP in the presence of single-stranded DNA, the ATP-dependent uptake of single-stranded DNA by duplex DNA, and the ATP-dependent hybridization of homologous single-stranded DNAs. It interacts with LexA causing its activation and leading to its autocatalytic cleavage. This chain is Protein RecA, found in Geobacter sulfurreducens (strain ATCC 51573 / DSM 12127 / PCA).